A 377-amino-acid chain; its full sequence is Carbamoyl phosphate synthase small chain (377 aa).

A CPSase region spans residues 1-186; sequence MNTPALLVLA…LGKGFVTPDK (186 aa). 3 residues coordinate L-glutamine: Ser-47, Gly-238, and Gly-240. The Glutamine amidotransferase type-1 domain maps to 190 to 377; that stretch reads HVVAYDFGVK…IGNMKAAKQA (188 aa). Cys-266 acts as the Nucleophile in catalysis. Residues Leu-267, Gln-270, Asn-308, Gly-310, and Phe-311 each coordinate L-glutamine. Active-site residues include His-350 and Glu-352.

It belongs to the CarA family. In terms of assembly, composed of two chains; the small (or glutamine) chain promotes the hydrolysis of glutamine to ammonia, which is used by the large (or ammonia) chain to synthesize carbamoyl phosphate. Tetramer of heterodimers (alpha,beta)4.

The catalysed reaction is hydrogencarbonate + L-glutamine + 2 ATP + H2O = carbamoyl phosphate + L-glutamate + 2 ADP + phosphate + 2 H(+). It carries out the reaction L-glutamine + H2O = L-glutamate + NH4(+). The protein operates within amino-acid biosynthesis; L-arginine biosynthesis; carbamoyl phosphate from bicarbonate: step 1/1. It functions in the pathway pyrimidine metabolism; UMP biosynthesis via de novo pathway; (S)-dihydroorotate from bicarbonate: step 1/3. Its function is as follows. Small subunit of the glutamine-dependent carbamoyl phosphate synthetase (CPSase). CPSase catalyzes the formation of carbamoyl phosphate from the ammonia moiety of glutamine, carbonate, and phosphate donated by ATP, constituting the first step of 2 biosynthetic pathways, one leading to arginine and/or urea and the other to pyrimidine nucleotides. The small subunit (glutamine amidotransferase) binds and cleaves glutamine to supply the large subunit with the substrate ammonia. The polypeptide is Carbamoyl phosphate synthase small chain (Neisseria gonorrhoeae).